A 213-amino-acid polypeptide reads, in one-letter code: 3-isopropylmalate dehydratase small subunit (213 aa).

Belongs to the LeuD family. LeuD type 1 subfamily. Heterodimer of LeuC and LeuD.

The enzyme catalyses (2R,3S)-3-isopropylmalate = (2S)-2-isopropylmalate. The protein operates within amino-acid biosynthesis; L-leucine biosynthesis; L-leucine from 3-methyl-2-oxobutanoate: step 2/4. Catalyzes the isomerization between 2-isopropylmalate and 3-isopropylmalate, via the formation of 2-isopropylmaleate. This Neisseria meningitidis serogroup B (strain ATCC BAA-335 / MC58) protein is 3-isopropylmalate dehydratase small subunit.